The primary structure comprises 775 residues: MVYAHNLGFPRIGIKREMKKTVEAYWRGEISQQQLQQQAIELQLTNWKIQAEAGVDLIPVGDFSWYDHVLDMAVRVGAIPSRFKALNSNITDTMFCMARGQAPNGIETSACEMTKWFDTNYHYIVPEFTTNQSFELHHDDLFKSTKLALENNYRAKPVILGPLSFLWLGKCKGESFNKLLLLEKLLPVYAEIFEQLSSLGVEWVQVDEPILVLDLPPEWQQAFLTTYQQLNFFNLKCLLATYFGSLDDNLSLTCQLPVDGLHIDYCRAPDQLDSVLSQLPAEKILSVGIIDGRNIWCNDLNRSLTLLENIQSSLGDRLWVAPSCSLLHVPIDLDQENKLDVELKSWFAFAKQKVAEAAFLTRGLREGRESIGAELKKNEEVIISRKTSKRIHNPNVEKKAASVTERLMRRQHEHSIRKNKQTAQLNLPLFPTTTIGSFPQTSQIRCLRRDYKQGKIDDALYEEKIRQEIAEVIGIQVKLGLDVLVHGEPERNDMVEYFGELLDGIAITSNGWVQSYGSRCVKPPIIFGDVSRERPMTLRWIEYAQSLTTKSVKGMLTGPVTILAWSFVRDDQPRSQTAKQIALALRDEVQDLERSGVRVIQIDEPAFRECLPLRKAAWQDYLEWAVKCFRLASCGVKDETQIHTHMCYSEFNDIIEAIAALDADVITIESSRSETEILKSFEKFAYPNDIGPGIYDIHSPRIPRVAEIEELAVRALQYIPIERLWINPDCGLKTRNWEETKEALSRMVDAAKHLRKAFSSEKTPTIDLELQPAST.

5-methyltetrahydropteroyltri-L-glutamate contacts are provided by residues 16-19 (REMK) and Lys115. L-homocysteine is bound by residues 435–437 (IGS) and Glu488. Residues 435–437 (IGS) and Glu488 each bind L-methionine. Residues 519 to 520 (RC) and Trp565 contribute to the 5-methyltetrahydropteroyltri-L-glutamate site. Asp603 is a binding site for L-homocysteine. Asp603 is a binding site for L-methionine. Glu609 is a binding site for 5-methyltetrahydropteroyltri-L-glutamate. Zn(2+) contacts are provided by His645, Cys647, and Glu669. The active-site Proton donor is the His698. Position 730 (Cys730) interacts with Zn(2+).

This sequence belongs to the vitamin-B12 independent methionine synthase family. Requires Zn(2+) as cofactor.

The enzyme catalyses 5-methyltetrahydropteroyltri-L-glutamate + L-homocysteine = tetrahydropteroyltri-L-glutamate + L-methionine. The protein operates within amino-acid biosynthesis; L-methionine biosynthesis via de novo pathway; L-methionine from L-homocysteine (MetE route): step 1/1. Catalyzes the transfer of a methyl group from 5-methyltetrahydrofolate to homocysteine resulting in methionine formation. This Coxiella burnetii (strain CbuK_Q154) (Coxiella burnetii (strain Q154)) protein is 5-methyltetrahydropteroyltriglutamate--homocysteine methyltransferase.